Reading from the N-terminus, the 194-residue chain is Peptidyl-tRNA hydrolase (194 aa).

Tyr-17 contacts tRNA. The active-site Proton acceptor is the His-22. Tyr-68, Asn-70, and Asn-116 together coordinate tRNA.

Belongs to the PTH family. Monomer.

The protein localises to the cytoplasm. The catalysed reaction is an N-acyl-L-alpha-aminoacyl-tRNA + H2O = an N-acyl-L-amino acid + a tRNA + H(+). Its function is as follows. Hydrolyzes ribosome-free peptidyl-tRNAs (with 1 or more amino acids incorporated), which drop off the ribosome during protein synthesis, or as a result of ribosome stalling. In terms of biological role, catalyzes the release of premature peptidyl moieties from peptidyl-tRNA molecules trapped in stalled 50S ribosomal subunits, and thus maintains levels of free tRNAs and 50S ribosomes. The protein is Peptidyl-tRNA hydrolase of Pseudoalteromonas translucida (strain TAC 125).